The sequence spans 127 residues: uncharacterized protein (127 aa).

A signal peptide spans 1–16 (MIKKIIFGIAILLSLS). The N-palmitoyl cysteine moiety is linked to residue cysteine 17. Cysteine 17 carries the S-diacylglycerol cysteine lipid modification. Residues 56–101 (EVRKEIQEYRVEIVDINKKKRELYNSLSKEAQNFLAEQQKYKQKLS) are a coiled coil. Residues 101-127 (SISKLPTEDDSPNNTANSKDNKDTDTK) are disordered.

The protein resides in the cell membrane. This is an uncharacterized protein from Rickettsia felis (strain ATCC VR-1525 / URRWXCal2) (Rickettsia azadi).